The following is a 222-amino-acid chain: Ras-related protein RABA4d (222 aa).

A GTP-binding site is contributed by 22 to 29 (GDSAVGKT). The short motif at 44–52 (SKATIGVEF) is the Effector region element. Residues 70-74 (DTAGQ), 128-131 (NKCD), and 158-159 (SA) each bind GTP. 2 S-geranylgeranyl cysteine lipidation sites follow: Cys-218 and Cys-219.

The protein belongs to the small GTPase superfamily. Rab family. In terms of assembly, interacts with PI4KB1. As to expression, specifically expressed in pollen and localized to the tips of growing pollen tubes.

Its subcellular location is the cytoplasmic vesicle membrane. Intracellular vesicle trafficking and protein transport. Plays an important role in the regulation of pollen tube tip growth. The sequence is that of Ras-related protein RABA4d (RABA4D) from Arabidopsis thaliana (Mouse-ear cress).